The primary structure comprises 546 residues: MVCFSKYSGITLDMRLILIDWLIEVHYEYECIIDTLCLAIILVDEFVDRIDKIDRKYFQCIGICCMNIATKILEPEHIGSENCNFISASQYTTDVIISYEKNILQTLDFHLVRKTILDSLWSKIKDFSRQKKNMGIFFTIVSMTSDKYKCFPCEKIADGIIKLVDLIDNYPIDSIDYTDEINTDTIMRYLWSQLTICTNKKLDGYTDLIKNLEIDFEFMKKLTSDIILKPKIVLFPSKNLELYTPLRHCFQYNTEDISNITVVKNLGEGTYGTVDLVTLNASKAAIKTQKELNEEISPDMVNEIVFLRIMDHPNIIKLYGYHLGSQTKLVLEPMESSLRRFIIDDTWNNLNKTLGITNNIFSDNQKIFYIKQLLEGLKYLHENRIVHGDLTCSNILISKSKLKICDFGSSKIIHPKNKLNYKTSKCSLWYRAIELLLEQNYDEKIDVWSVACICGFILGDKLFDGDNESEIIENIFSHLGTPDPIIFESKTSINIPTKKYKFVGFEKLEEKYPDITSIIYRMLSYDSKMRISASQTLEEFNKFNSD.

Residues 1-112 (MVCFSKYSGI…ILQTLDFHLV (112 aa)) enclose the Cyclin N-terminal domain. The region spanning 260-544 (ITVVKNLGEG…QTLEEFNKFN (285 aa)) is the Protein kinase domain. Residues 266 to 274 (LGEGTYGTV) and K287 contribute to the ATP site. D389 functions as the Proton acceptor in the catalytic mechanism.

Belongs to the protein kinase superfamily. Ser/Thr protein kinase family.

It carries out the reaction L-seryl-[protein] + ATP = O-phospho-L-seryl-[protein] + ADP + H(+). The enzyme catalyses L-threonyl-[protein] + ATP = O-phospho-L-threonyl-[protein] + ADP + H(+). The polypeptide is Putative serine/threonine-protein kinase L268 (Acanthamoeba polyphaga mimivirus (APMV)).